Here is a 303-residue protein sequence, read N- to C-terminus: Ribosomal protein L11 methyltransferase (303 aa).

S-adenosyl-L-methionine contacts are provided by T146, G167, D189, and N236.

It belongs to the methyltransferase superfamily. PrmA family.

It localises to the cytoplasm. The catalysed reaction is L-lysyl-[protein] + 3 S-adenosyl-L-methionine = N(6),N(6),N(6)-trimethyl-L-lysyl-[protein] + 3 S-adenosyl-L-homocysteine + 3 H(+). Functionally, methylates ribosomal protein L11. This chain is Ribosomal protein L11 methyltransferase, found in Acinetobacter baylyi (strain ATCC 33305 / BD413 / ADP1).